A 224-amino-acid polypeptide reads, in one-letter code: MNIIFFGPNGSGKGTQGSILKDKYKIAHIESGAIFRDNIKGGTDLGMKAKAYIDKGDLVPDEITIPMILDRLKQDDCAKGWLLDGFPRNKVQAEKLDASLKKEKMKLDIIIEMLLDRQIAKDRIMGRRLCENDNNHPNNIFIDAIKPNGDKCRVCGGALSSRADDQDETAIDKRHSIYYNDVDGTLAAAYYFRDLAKKDDSIKYITLEGKNALPDVTKELVSKL.

10–15 contacts ATP; sequence GSGKGT. The interval 30 to 59 is NMP; it reads ESGAIFRDNIKGGTDLGMKAKAYIDKGDLV. Residues Ser31, Arg36, 57 to 59, 85 to 88, and Gln92 contribute to the AMP site; these read DLV and GFPR. Positions 126–165 are LID; the sequence is GRRLCENDNNHPNNIFIDAIKPNGDKCRVCGGALSSRADD. An ATP-binding site is contributed by Arg127. Positions 162 and 174 each coordinate AMP. Residue Asn211 coordinates ATP.

The protein belongs to the adenylate kinase family. In terms of assembly, monomer.

The protein localises to the cytoplasm. It carries out the reaction AMP + ATP = 2 ADP. The protein operates within purine metabolism; AMP biosynthesis via salvage pathway; AMP from ADP: step 1/1. In terms of biological role, catalyzes the reversible transfer of the terminal phosphate group between ATP and AMP. Plays an important role in cellular energy homeostasis and in adenine nucleotide metabolism. The chain is Adenylate kinase from Desulforapulum autotrophicum (strain ATCC 43914 / DSM 3382 / VKM B-1955 / HRM2) (Desulfobacterium autotrophicum).